Here is a 1085-residue protein sequence, read N- to C-terminus: Kinesin-like protein cut7 (1085 aa).

The disordered stretch occupies residues 1–70 (MAPRVAPGGS…TDHALHDENE (70 aa)). Polar residues predominate over residues 24–37 (PVSTPNSHFRSASN). A Kinesin motor domain is found at 72-421 (NINVVVRVRG…LEYAARAKSI (350 aa)). An ATP-binding site is contributed by 159–166 (GQTGTGKT). Coiled-coil stretches lie at residues 436 to 604 (LIKD…WNLK), 715 to 740 (ISSELIELQKDMKESYRQLVQELRSL), and 897 to 955 (LALA…DSIK). 2 consecutive repeats follow at residues 987 to 998 (DESLCNLETTIE) and 999 to 1010 (DTSLVKLETTGD). At Thr-1011 the chain carries Phosphothreonine; by CDC2. The disordered stretch occupies residues 1049 to 1085 (YTSSNQTNEPDVYDKPSNSSRTSLLRSSRSAYSKMKR). A compositionally biased stretch (low complexity) spans 1065–1078 (SNSSRTSLLRSSRS).

Belongs to the TRAFAC class myosin-kinesin ATPase superfamily. Kinesin family. BimC subfamily.

Its subcellular location is the cytoplasm. The protein resides in the cytoskeleton. It localises to the microtubule organizing center. The protein localises to the spindle pole body. Could be a spindle pole body motor. On transition from G2 to M phase of the cell cycle, the spindle pole body duplicates; the daughter pole bodies seed microtubules which interdigitate to form a short spindle that elongates to span the nucleus at metaphase. Mutations at cut7 block spindle formation. The sequence is that of Kinesin-like protein cut7 (cut7) from Schizosaccharomyces pombe (strain 972 / ATCC 24843) (Fission yeast).